The following is a 213-amino-acid chain: ATP synthase peripheral stalk subunit OSCP, mitochondrial (213 aa).

The transit peptide at 1–23 (MAAPAASGLSRQVRSFSTSVVRP) directs the protein to the mitochondrion. Residues 5 to 23 (AASGLSRQVRSFSTSVVRP) carry the SIFI-degron motif. Lysine 54, lysine 60, lysine 70, and lysine 73 each carry N6-acetyllysine. N6-succinyllysine is present on lysine 90. Residues lysine 100, lysine 158, and lysine 162 each carry the N6-acetyllysine; alternate modification. Lysine 100, lysine 158, and lysine 162 each carry N6-succinyllysine; alternate. N6-acetyllysine occurs at positions 172, 176, and 192. N6-succinyllysine is present on lysine 199.

It belongs to the ATPase delta chain family. As to quaternary structure, component of the ATP synthase complex composed at least of ATP5F1A/subunit alpha, ATP5F1B/subunit beta, ATP5MC1/subunit c (homooctomer), MT-ATP6/subunit a, MT-ATP8/subunit 8, ATP5ME/subunit e, ATP5MF/subunit f, ATP5MG/subunit g, ATP5MK/subunit k, ATP5MJ/subunit j, ATP5F1C/subunit gamma, ATP5F1D/subunit delta, ATP5F1E/subunit epsilon, ATP5PF/subunit F6, ATP5PB/subunit b, ATP5PD/subunit d, ATP5PO/subunit OSCP. ATP synthase complex consists of a soluble F(1) head domain (subunits alpha(3) and beta(3)) - the catalytic core - and a membrane F(0) domain - the membrane proton channel (subunits c, a, 8, e, f, g, k and j). These two domains are linked by a central stalk (subunits gamma, delta, and epsilon) rotating inside the F1 region and a stationary peripheral stalk (subunits F6, b, d, and OSCP). In terms of processing, acetylation of Lys-70 and Lys-158 is observed in liver mitochondria from fasted mice but not from fed mice. Acetylation at Lys-162 decreases ATP production. Deacetylated by SIRT3. Post-translationally, in response to mitochondrial stress, the precursor protein is ubiquitinated by the SIFI complex in the cytoplasm before mitochondrial import, leading to its degradation. Within the SIFI complex, UBR4 initiates ubiquitin chain that are further elongated or branched by KCMF1.

It localises to the mitochondrion. The protein localises to the mitochondrion inner membrane. Functionally, subunit OSCP, of the mitochondrial membrane ATP synthase complex (F(1)F(0) ATP synthase or Complex V) that produces ATP from ADP in the presence of a proton gradient across the membrane which is generated by electron transport complexes of the respiratory chain. ATP synthase complex consist of a soluble F(1) head domain - the catalytic core - and a membrane F(1) domain - the membrane proton channel. These two domains are linked by a central stalk rotating inside the F(1) region and a stationary peripheral stalk. During catalysis, ATP synthesis in the catalytic domain of F(1) is coupled via a rotary mechanism of the central stalk subunits to proton translocation. In vivo, can only synthesize ATP although its ATP hydrolase activity can be activated artificially in vitro. Part of the complex F(0) domain. Part of the complex F(0) domain and the peripheric stalk, which acts as a stator to hold the catalytic alpha(3)beta(3) subcomplex and subunit a/ATP6 static relative to the rotary elements. This chain is ATP synthase peripheral stalk subunit OSCP, mitochondrial, found in Mus musculus (Mouse).